The following is a 377-amino-acid chain: D-alanine--D-alanine ligase (377 aa).

The ATP-grasp domain occupies 140 to 349; that stretch reads KELLTVNGIR…NAKLVDMLID (210 aa). 170–225 lines the ATP pocket; the sequence is VAELGNIVFVKAANQGSSVGISRVTNAEEYTEALSDSFQYDYKVLIEEAVNGAREL. The Mg(2+) site is built by Asp303, Glu316, and Asn318.

Belongs to the D-alanine--D-alanine ligase family. Mg(2+) serves as cofactor. Requires Mn(2+) as cofactor.

Its subcellular location is the cytoplasm. It carries out the reaction 2 D-alanine + ATP = D-alanyl-D-alanine + ADP + phosphate + H(+). It participates in cell wall biogenesis; peptidoglycan biosynthesis. Its function is as follows. Cell wall formation. In Leuconostoc mesenteroides subsp. mesenteroides (strain ATCC 8293 / DSM 20343 / BCRC 11652 / CCM 1803 / JCM 6124 / NCDO 523 / NBRC 100496 / NCIMB 8023 / NCTC 12954 / NRRL B-1118 / 37Y), this protein is D-alanine--D-alanine ligase.